The sequence spans 329 residues: GTP 3',8-cyclase (329 aa).

In terms of domain architecture, Radical SAM core spans 8 to 234 (AFARKFYYLR…QLRSRADGPA (227 aa)). Arg17 contributes to the GTP binding site. Residues Cys24 and Cys28 each contribute to the [4Fe-4S] cluster site. Residue Tyr30 participates in S-adenosyl-L-methionine binding. Cys31 serves as a coordination point for [4Fe-4S] cluster. Arg68 contributes to the GTP binding site. Residue Gly72 participates in S-adenosyl-L-methionine binding. Position 99 (Thr99) interacts with GTP. Ser123 lines the S-adenosyl-L-methionine pocket. Lys160 contacts GTP. Met194 provides a ligand contact to S-adenosyl-L-methionine. [4Fe-4S] cluster-binding residues include Cys257 and Cys260. Residue 262–264 (RLR) coordinates GTP. Residue Cys274 coordinates [4Fe-4S] cluster.

Belongs to the radical SAM superfamily. MoaA family. As to quaternary structure, monomer and homodimer. The cofactor is [4Fe-4S] cluster.

The catalysed reaction is GTP + AH2 + S-adenosyl-L-methionine = (8S)-3',8-cyclo-7,8-dihydroguanosine 5'-triphosphate + 5'-deoxyadenosine + L-methionine + A + H(+). Its pathway is cofactor biosynthesis; molybdopterin biosynthesis. Functionally, catalyzes the cyclization of GTP to (8S)-3',8-cyclo-7,8-dihydroguanosine 5'-triphosphate. This chain is GTP 3',8-cyclase, found in Cronobacter sakazakii (strain ATCC BAA-894) (Enterobacter sakazakii).